The chain runs to 99 residues: Evasin P1162 (99 aa).

The signal sequence occupies residues 1–28 (MEVKTFAFLQIAVCIAIGIELICAGTNA). 3 cysteine pairs are disulfide-bonded: cysteine 40–cysteine 59, cysteine 44–cysteine 61, and cysteine 55–cysteine 72. 4 N-linked (GlcNAc...) asparagine glycosylation sites follow: asparagine 43, asparagine 49, asparagine 58, and asparagine 85.

Its subcellular location is the secreted. Salivary chemokine-binding protein which binds to host chemokines CXCL1, CXCL2, CXCL3, CXCL5 and CXCL8. This chain is Evasin P1162, found in Ixodes ricinus (Common tick).